We begin with the raw amino-acid sequence, 289 residues long: tRNA dimethylallyltransferase (289 aa).

ATP is bound at residue 9 to 16 (GTTASGKT). Position 11–16 (11–16 (TASGKT)) interacts with substrate. An interaction with substrate tRNA region spans residues 34-37 (DSLC).

The protein belongs to the IPP transferase family. Monomer. The cofactor is Mg(2+).

It catalyses the reaction adenosine(37) in tRNA + dimethylallyl diphosphate = N(6)-dimethylallyladenosine(37) in tRNA + diphosphate. Functionally, catalyzes the transfer of a dimethylallyl group onto the adenine at position 37 in tRNAs that read codons beginning with uridine, leading to the formation of N6-(dimethylallyl)adenosine (i(6)A). This chain is tRNA dimethylallyltransferase, found in Campylobacter jejuni (strain RM1221).